The chain runs to 569 residues: Phosphatase and actin regulator 2 (569 aa).

A compositionally biased stretch (polar residues) spans 1 to 13 (MGQTSVSALSPQP). A disordered region spans residues 1–47 (MGQTSVSALSPQPGSVDGLDKASIANSDGPPAGSQTPPFKRKGKLST). The residue at position 27 (S27) is a Phosphoserine. T36 is subject to Phosphothreonine. An RPEL 1 repeat occupies 71–96 (AVLERKISTRQSREELIRRGLLKELP). 2 disordered regions span residues 98-253 (QDGD…TGKP) and 295-483 (PTLP…QEAK). The segment covering 140–151 (GPPREEQAEEKT) has biased composition (basic and acidic residues). Residues 162–176 (GSKASSSPSASSTSS) are compositionally biased toward low complexity. Polar residues predominate over residues 212-224 (LSPNTVTSETSSL). Residue S357 is modified to Phosphoserine. Acidic residues predominate over residues 386 to 399 (TDDDDEEDDDDDST). RPEL repeat units lie at residues 412-437 (DTLA…QRTS), 450-475 (TKLV…KQKN), and 488-513 (RRLS…RFNE). Residues 423–444 (SKKELEDKNILQRTSEEERQEL) are compositionally biased toward basic and acidic residues. At S457 the chain carries Phosphoserine. Over residues 461 to 483 (TTEELEQRSILKQKNEEEEQEAK) the composition is skewed to basic and acidic residues. S495 bears the Phosphoserine mark.

The protein belongs to the phosphatase and actin regulator family. Binds PPP1CA and actin. As to expression, expressed in the brain with high levels in the cerebellum, specifically in the Purkinje cell layer, choroid plexus and thalamus (ventral, rhomboid and anterior nuclei). Moderate to high expression in the hippocampus, piriform cortex, olfactory bulb, entorhinal cortex, as well as in geniculate bodies, lamboid septal zone, preoptic area and ventral pallidum (at protein level).

The protein is Phosphatase and actin regulator 2 (Phactr2) of Rattus norvegicus (Rat).